Reading from the N-terminus, the 328-residue chain is Biotin synthase (328 aa).

The 231-residue stretch at 48 to 278 (FTGNSASLCS…GKSLSVCGGR (231 aa)) folds into the Radical SAM core domain. [4Fe-4S] cluster contacts are provided by Cys66, Cys70, and Cys73. Ser143 and Cys203 together coordinate [2Fe-2S] cluster.

Belongs to the radical SAM superfamily. Biotin synthase family. As to quaternary structure, homodimer. [4Fe-4S] cluster serves as cofactor. Requires [2Fe-2S] cluster as cofactor.

The enzyme catalyses (4R,5S)-dethiobiotin + (sulfur carrier)-SH + 2 reduced [2Fe-2S]-[ferredoxin] + 2 S-adenosyl-L-methionine = (sulfur carrier)-H + biotin + 2 5'-deoxyadenosine + 2 L-methionine + 2 oxidized [2Fe-2S]-[ferredoxin]. It functions in the pathway cofactor biosynthesis; biotin biosynthesis; biotin from 7,8-diaminononanoate: step 2/2. Functionally, catalyzes the conversion of dethiobiotin (DTB) to biotin by the insertion of a sulfur atom into dethiobiotin via a radical-based mechanism. This is Biotin synthase from Pelobacter propionicus (strain DSM 2379 / NBRC 103807 / OttBd1).